Here is a 156-residue protein sequence, read N- to C-terminus: Small ribosomal subunit protein uS7 (156 aa).

The protein belongs to the universal ribosomal protein uS7 family. In terms of assembly, part of the 30S ribosomal subunit. Contacts proteins S9 and S11.

One of the primary rRNA binding proteins, it binds directly to 16S rRNA where it nucleates assembly of the head domain of the 30S subunit. Is located at the subunit interface close to the decoding center, probably blocks exit of the E-site tRNA. This Renibacterium salmoninarum (strain ATCC 33209 / DSM 20767 / JCM 11484 / NBRC 15589 / NCIMB 2235) protein is Small ribosomal subunit protein uS7.